A 103-amino-acid polypeptide reads, in one-letter code: Large ribosomal subunit protein uL24 (103 aa).

The protein belongs to the universal ribosomal protein uL24 family. In terms of assembly, part of the 50S ribosomal subunit.

In terms of biological role, one of two assembly initiator proteins, it binds directly to the 5'-end of the 23S rRNA, where it nucleates assembly of the 50S subunit. Functionally, one of the proteins that surrounds the polypeptide exit tunnel on the outside of the subunit. The protein is Large ribosomal subunit protein uL24 of Lachnospira eligens (strain ATCC 27750 / DSM 3376 / VPI C15-48 / C15-B4) (Eubacterium eligens).